Here is a 213-residue protein sequence, read N- to C-terminus: Protein ras-1 (213 aa).

Residue 15–22 (GGGGVGKS) participates in GTP binding. Positions 37–45 (YDPTIEDSY) match the Effector region motif. Residues 62 to 66 (DTAGQ) and 121 to 124 (NKYD) each bind GTP. Residue Cys-210 is modified to Cysteine methyl ester. Cys-210 carries S-farnesyl cysteine lipidation. Residues 211–213 (IMM) constitute a propeptide, removed in mature form.

It belongs to the small GTPase superfamily. Ras family.

It is found in the cell membrane. It catalyses the reaction GTP + H2O = GDP + phosphate + H(+). Ras proteins bind GDP/GTP and possess intrinsic GTPase activity. This chain is Protein ras-1 (ras-1), found in Neurospora crassa (strain ATCC 24698 / 74-OR23-1A / CBS 708.71 / DSM 1257 / FGSC 987).